A 688-amino-acid polypeptide reads, in one-letter code: Elongation factor G (688 aa).

A tr-type G domain is found at K6–I280. GTP-binding positions include A15–T22, D79–H83, and N133–D136.

Belongs to the TRAFAC class translation factor GTPase superfamily. Classic translation factor GTPase family. EF-G/EF-2 subfamily.

Its subcellular location is the cytoplasm. In terms of biological role, catalyzes the GTP-dependent ribosomal translocation step during translation elongation. During this step, the ribosome changes from the pre-translocational (PRE) to the post-translocational (POST) state as the newly formed A-site-bound peptidyl-tRNA and P-site-bound deacylated tRNA move to the P and E sites, respectively. Catalyzes the coordinated movement of the two tRNA molecules, the mRNA and conformational changes in the ribosome. The polypeptide is Elongation factor G (Ureaplasma parvum serovar 3 (strain ATCC 27815 / 27 / NCTC 11736)).